The following is a 215-amino-acid chain: Protein GET1 (215 aa).

Over 1-4 (MPSL) the chain is Lumenal. A helical transmembrane segment spans residues 5–24 (LILIFTIEVAVELINTIGAA). The Cytoplasmic segment spans residues 25 to 110 (TINNLLWRIF…NFDKYITGIR (86 aa)). Residues 72 to 104 (AKWAKLRRQHDKLLEQLEKKKAALDSTKGNFDK) are a coiled coil. A helical membrane pass occupies residues 111–131 (WVGTQGLRYFLPFWYAKVPMF). Over 132–155 (WLPYGWFPYYAEWLVSFPRAPMGS) the chain is Lumenal. The helical transmembrane segment at 156 to 172 (VSIASWQLACTGFVVLI) threads the bilayer. Over 173-215 (KDAITALVVFVMGMRQSNVKQAVPVKAVSGEKASDEKEGKKEL) the chain is Cytoplasmic.

This sequence belongs to the WRB/GET1 family. As to quaternary structure, interacts with GET3.

The protein resides in the endoplasmic reticulum membrane. Functionally, required for the post-translational delivery of tail-anchored (TA) proteins to the endoplasmic reticulum. Acts as a membrane receptor for soluble GET3, which recognizes and selectively binds the transmembrane domain of TA proteins in the cytosol. This Pyricularia oryzae (strain 70-15 / ATCC MYA-4617 / FGSC 8958) (Rice blast fungus) protein is Protein GET1.